The sequence spans 60 residues: Large ribosomal subunit protein bL32 (60 aa).

The segment at 1 to 60 is disordered; that stretch reads MAVQQNKKSPSKRGMHRSHDFLVNPPTAIEPTTGESHLRHHISPNGFYRGRKILKTKADE. Basic residues predominate over residues 49 to 60; sequence RGRKILKTKADE.

The protein belongs to the bacterial ribosomal protein bL32 family.

The chain is Large ribosomal subunit protein bL32 from Bordetella avium (strain 197N).